The following is a 202-amino-acid chain: Adenosylcobalamin/alpha-ribazole phosphatase (202 aa).

His-8 acts as the Tele-phosphohistidine intermediate in catalysis. The active-site Proton donor/acceptor is Glu-81.

It belongs to the phosphoglycerate mutase family.

It catalyses the reaction adenosylcob(III)alamin 5'-phosphate + H2O = adenosylcob(III)alamin + phosphate. The catalysed reaction is alpha-ribazole 5'-phosphate + H2O = alpha-ribazole + phosphate. It participates in nucleoside biosynthesis; alpha-ribazole biosynthesis; alpha-ribazole from 5,6-dimethylbenzimidazole: step 2/2. Its function is as follows. Catalyzes the conversion of adenosylcobalamin 5'-phosphate to adenosylcobalamin (vitamin B12); involved in the assembly of the nucleotide loop of cobalamin. Also catalyzes the hydrolysis of the phospho group from alpha-ribazole 5'-phosphate to form alpha-ribazole. The chain is Adenosylcobalamin/alpha-ribazole phosphatase (cobC) from Salmonella typhi.